The primary structure comprises 103 residues: MAVQQKIRIKLKSYDHSLVDKWALRIIDVVKQTDAIIFGPIPLPTKSHVYTVNRSPHVDKKSREQFSFASHKRLIEIINPTSRTIDMLMKLELPSGVDVEIKS.

The protein belongs to the universal ribosomal protein uS10 family. As to quaternary structure, part of the 30S ribosomal subunit.

Its function is as follows. Involved in the binding of tRNA to the ribosomes. This is Small ribosomal subunit protein uS10 from Chlorobium luteolum (strain DSM 273 / BCRC 81028 / 2530) (Pelodictyon luteolum).